Here is a 149-residue protein sequence, read N- to C-terminus: Cytochrome c-type biogenesis protein CcmE (149 aa).

The Cytoplasmic segment spans residues 1–7 (MKKRHQR). The chain crosses the membrane as a helical; Signal-anchor for type II membrane protein span at residues 8–28 (LFLVLGVVAGVSVATALVLNA). Over 29–149 (FRDNMTFFIT…EHSVDEVGDY (121 aa)) the chain is Periplasmic. 2 residues coordinate heme: histidine 123 and tyrosine 127.

Belongs to the CcmE/CycJ family.

The protein localises to the cell inner membrane. In terms of biological role, heme chaperone required for the biogenesis of c-type cytochromes. Transiently binds heme delivered by CcmC and transfers the heme to apo-cytochromes in a process facilitated by CcmF and CcmH. This Halorhodospira halophila (strain DSM 244 / SL1) (Ectothiorhodospira halophila (strain DSM 244 / SL1)) protein is Cytochrome c-type biogenesis protein CcmE.